A 778-amino-acid polypeptide reads, in one-letter code: Subtilisin-like protease SBT3.6 (778 aa).

Positions 1 to 22 (MMNYRTSIYVVLSLVIFLNVQR) are cleaved as a signal peptide. Positions 23 to 113 (SFVAESSAKR…VIPDSFYKLA (91 aa)) are cleaved as a propeptide — activation peptide. The Inhibitor I9 domain maps to 34-113 (VHIVYLGEKQ…VIPDSFYKLA (80 aa)). An N-linked (GlcNAc...) asparagine glycan is attached at Asn69. Positions 117-625 (TWDYLGLSAA…GGLVNPEKSA (509 aa)) constitute a Peptidase S8 domain. Asp147 (charge relay system) is an active-site residue. Asn158, Asn180, Asn202, and Asn206 each carry an N-linked (GlcNAc...) asparagine glycan. His222 functions as the Charge relay system in the catalytic mechanism. 4 N-linked (GlcNAc...) asparagine glycosylation sites follow: Asn237, Asn399, Asn414, and Asn541. Positions 388–483 (SLVYPENPGN…ELGTDILLYT (96 aa)) constitute a PA domain. Ser556 functions as the Charge relay system in the catalytic mechanism. N-linked (GlcNAc...) asparagine glycans are attached at residues Asn648, Asn724, and Asn759.

The protein belongs to the peptidase S8 family.

The protein localises to the secreted. The protein is Subtilisin-like protease SBT3.6 of Arabidopsis thaliana (Mouse-ear cress).